The sequence spans 680 residues: DNA ligase (680 aa).

Residues 35–39, 84–85, and Glu115 contribute to the NAD(+) site; these read DAQYD and SL. Lys117 serves as the catalytic N6-AMP-lysine intermediate. Positions 138, 174, 291, and 315 each coordinate NAD(+). Zn(2+) contacts are provided by Cys419, Cys422, Cys437, and Cys442. Residues 601–680 enclose the BRCT domain; the sequence is NKNMPFSGME…REFINMLEQS (80 aa).

It belongs to the NAD-dependent DNA ligase family. LigA subfamily. Mg(2+) serves as cofactor. The cofactor is Mn(2+).

The enzyme catalyses NAD(+) + (deoxyribonucleotide)n-3'-hydroxyl + 5'-phospho-(deoxyribonucleotide)m = (deoxyribonucleotide)n+m + AMP + beta-nicotinamide D-nucleotide.. Functionally, DNA ligase that catalyzes the formation of phosphodiester linkages between 5'-phosphoryl and 3'-hydroxyl groups in double-stranded DNA using NAD as a coenzyme and as the energy source for the reaction. It is essential for DNA replication and repair of damaged DNA. This Dehalococcoides mccartyi (strain ATCC BAA-2100 / JCM 16839 / KCTC 5957 / BAV1) protein is DNA ligase.